A 572-amino-acid chain; its full sequence is Phenylalanine--tRNA ligase beta subunit (572 aa).

Residues 278–353 (LTPKEFEVEF…IAYGYNEIKP (76 aa)) form the B5 domain. 4 residues coordinate Mg(2+): aspartate 331, aspartate 337, glutamate 340, and aspartate 341.

Belongs to the phenylalanyl-tRNA synthetase beta subunit family. Type 2 subfamily. Tetramer of two alpha and two beta subunits. It depends on Mg(2+) as a cofactor.

The protein resides in the cytoplasm. It carries out the reaction tRNA(Phe) + L-phenylalanine + ATP = L-phenylalanyl-tRNA(Phe) + AMP + diphosphate + H(+). The polypeptide is Phenylalanine--tRNA ligase beta subunit (Thermococcus onnurineus (strain NA1)).